Consider the following 1782-residue polypeptide: Atrochrysone carboxylic acid synthase (1782 aa).

Positions 41–270 are N-terminal acylcarrier protein transacylase domain (SAT); it reads HTYTKDRRYP…ALPVYGGLCH (230 aa). The Ketosynthase family 3 (KS3) domain occupies 407–841; sequence QSKIAIVGMS…GGNSTLAIEE (435 aa). Catalysis depends on for beta-ketoacyl synthase activity residues cysteine 580, histidine 716, and histidine 759. The interval 946–1266 is malonyl-CoA:ACP transacylase (MAT) domain; it reads FAFTGQGSSY…LGILHCAGVP (321 aa). The segment at 1331 to 1648 is product template (PT) domain; sequence TSTVQQIIHE…RILLNRFFSA (318 aa). The segment at 1335–1468 is N-terminal hotdog fold; sequence QQIIHEQYDG…ATVYYEEASD (134 aa). The 309-residue stretch at 1335–1643 folds into the PKS/mFAS DH domain; sequence QQIIHEQYDG…FRRYPRILLN (309 aa). Histidine 1367 acts as the Proton acceptor; for dehydratase activity in catalysis. The tract at residues 1495–1643 is C-terminal hotdog fold; sequence VANRFTRRMA…FRRYPRILLN (149 aa). The Proton donor; for dehydratase activity role is filled by aspartate 1554. The disordered stretch occupies residues 1653 to 1703; sequence ARKSTPATSAPAPAPPAGSEALQPKAAPASTPAAPASADAPTTNGVKAAAE. Over residues 1678 to 1695 the composition is skewed to low complexity; sequence AAPASTPAAPASADAPTT. The region spanning 1704 to 1781 is the Carrier domain; it reads PDANSTAAKA…DLKSWLLEYY (78 aa). Serine 1741 is subject to O-(pantetheine 4'-phosphoryl)serine.

Specifically expressed in conidia.

It catalyses the reaction holo-[ACP] + 8 malonyl-CoA + 8 H(+) = atrochrysone carboxyl-[ACP] + 8 CO2 + 8 CoA + 2 H2O. The protein operates within secondary metabolite biosynthesis. Non-reducing polyketide synthase; part of the gene cluster that mediates the biosynthesis of trypacidin, a mycotoxin with antiprotozoal activity and that plays a role in the infection process. The pathway begins with the synthesis of atrochrysone thioester by the polyketide synthase (PKS) tpcC. The atrochrysone carboxyl ACP thioesterase tpcB then breaks the thioester bond and releases the atrochrysone carboxylic acid from tpcC. The decarboxylase tpcK converts atrochrysone carboxylic acid to atrochrysone which is further reduced into emodin anthrone. The next step is performed by the emodin anthrone oxygenase tpcL that catalyzes the oxidation of emodin anthrone to emodin. Emodin O-methyltransferase encoded by tpcA catalyzes methylation of the 8-hydroxy group of emodin to form questin. Ring cleavage of questin by questin oxidase tpcI leads to desmethylsulochrin via several intermediates including questin epoxide. Another methylation step catalyzed by tpcM leads to the formation of sulochrin which is further converted to monomethylsulfochrin by tpcH. Finally, the tpcJ catalyzes the conversion of monomethylsulfochrin to trypacidin. Trypacidin is toxic for human pulmonary and bronchial epithelial cells by initiating the intracellular formation of nitric oxide (NO) and hydrogen peroxide (H(2)O(2)), thus triggering host necrotic cell death. The trypacidin pathway is also able to produce endocrocin via a distinct route from the endocrocin Enc pathway. This is Atrochrysone carboxylic acid synthase from Aspergillus fumigatus (strain ATCC MYA-4609 / CBS 101355 / FGSC A1100 / Af293) (Neosartorya fumigata).